Here is a 228-residue protein sequence, read N- to C-terminus: Aspartyl protease inhibitor (228 aa).

Positions 1-15 are cleaved as a signal peptide; it reads MKLIELCVLCAIAFA. Basic and acidic residues predominate over residues 88–112; sequence KLKSRMSGKKEEKAAVTSTKDEDLP. Positions 88 to 119 are disordered; the sequence is KLKSRMSGKKEEKAAVTSTKDEDLPKPPQKPS. The cysteines at positions 134 and 224 are disulfide-linked.

It belongs to the protease inhibitor I33 family.

Its subcellular location is the secreted. Its function is as follows. Aspartyl protease inhibitor. The sequence is that of Aspartyl protease inhibitor from Trichostrongylus colubriformis (Black scour worm).